Reading from the N-terminus, the 65-residue chain is DNA-directed RNA polymerase subunit Rpo10 (65 aa).

C7, C10, C44, and C45 together coordinate Zn(2+).

It belongs to the archaeal Rpo10/eukaryotic RPB10 RNA polymerase subunit family. As to quaternary structure, part of the RNA polymerase complex. Zn(2+) serves as cofactor.

It is found in the cytoplasm. The catalysed reaction is RNA(n) + a ribonucleoside 5'-triphosphate = RNA(n+1) + diphosphate. Its function is as follows. DNA-dependent RNA polymerase (RNAP) catalyzes the transcription of DNA into RNA using the four ribonucleoside triphosphates as substrates. The polypeptide is DNA-directed RNA polymerase subunit Rpo10 (Pyrococcus furiosus (strain ATCC 43587 / DSM 3638 / JCM 8422 / Vc1)).